The primary structure comprises 137 residues: uncharacterized protein (137 aa).

The interval 1–26 is disordered; sequence MKDKMWCEDTAQPHRRLPAPPSSSSP.

This is an uncharacterized protein from Homo sapiens (Human).